The chain runs to 608 residues: Aspartate--tRNA(Asp/Asn) ligase (608 aa).

Position 187 (Glu187) interacts with L-aspartate. Residues 211–214 (QQFK) form an aspartate region. L-aspartate is bound by residues Arg233 and His461. Position 233 to 235 (233 to 235 (RDE)) interacts with ATP. Position 495 (Glu495) interacts with ATP. Arg502 contributes to the L-aspartate binding site. 547-550 (GLDR) serves as a coordination point for ATP.

It belongs to the class-II aminoacyl-tRNA synthetase family. Type 1 subfamily. As to quaternary structure, homodimer.

The protein localises to the cytoplasm. It catalyses the reaction tRNA(Asx) + L-aspartate + ATP = L-aspartyl-tRNA(Asx) + AMP + diphosphate. Aspartyl-tRNA synthetase with relaxed tRNA specificity since it is able to aspartylate not only its cognate tRNA(Asp) but also tRNA(Asn). Reaction proceeds in two steps: L-aspartate is first activated by ATP to form Asp-AMP and then transferred to the acceptor end of tRNA(Asp/Asn). The polypeptide is Aspartate--tRNA(Asp/Asn) ligase (Prosthecochloris aestuarii (strain DSM 271 / SK 413)).